Consider the following 156-residue polypeptide: Small ribosomal subunit protein uS7 (156 aa).

Belongs to the universal ribosomal protein uS7 family. Part of the 30S ribosomal subunit. Contacts proteins S9 and S11.

One of the primary rRNA binding proteins, it binds directly to 16S rRNA where it nucleates assembly of the head domain of the 30S subunit. Is located at the subunit interface close to the decoding center, probably blocks exit of the E-site tRNA. The polypeptide is Small ribosomal subunit protein uS7 (Shewanella amazonensis (strain ATCC BAA-1098 / SB2B)).